Here is a 398-residue protein sequence, read N- to C-terminus: Ornithine aminotransferase (398 aa).

K256 bears the N6-(pyridoxal phosphate)lysine mark.

Belongs to the class-III pyridoxal-phosphate-dependent aminotransferase family. OAT subfamily. It depends on pyridoxal 5'-phosphate as a cofactor.

It is found in the cytoplasm. It catalyses the reaction a 2-oxocarboxylate + L-ornithine = L-glutamate 5-semialdehyde + an L-alpha-amino acid. It participates in amino-acid biosynthesis; L-proline biosynthesis; L-glutamate 5-semialdehyde from L-ornithine: step 1/1. In terms of biological role, catalyzes the interconversion of ornithine to glutamate semialdehyde. The sequence is that of Ornithine aminotransferase from Halalkalibacterium halodurans (strain ATCC BAA-125 / DSM 18197 / FERM 7344 / JCM 9153 / C-125) (Bacillus halodurans).